We begin with the raw amino-acid sequence, 202 residues long: Small ribosomal subunit protein uS4c (202 aa).

The S4 RNA-binding domain occupies 90–154; that stretch reads MRLDNILFRL…SQSIITKNLN (65 aa).

It belongs to the universal ribosomal protein uS4 family. In terms of assembly, part of the 30S ribosomal subunit. Contacts protein S5. The interaction surface between S4 and S5 is involved in control of translational fidelity.

It is found in the plastid. The protein resides in the chloroplast. In terms of biological role, one of the primary rRNA binding proteins, it binds directly to 16S rRNA where it nucleates assembly of the body of the 30S subunit. Its function is as follows. With S5 and S12 plays an important role in translational accuracy. This is Small ribosomal subunit protein uS4c (rps4) from Monoclea forsteri (Liverwort).